The chain runs to 212 residues: Nascent polypeptide-associated complex subunit alpha (212 aa).

2 disordered regions span residues 1-54 and 123-177; these read MSNP…SRNE and QLAA…EDKD. Acidic residues predominate over residues 22-38; it reads AEDEGSDSSDSEAEGEE. Residues 51–116 enclose the NAC-A/B domain; it reads SRNEKKARKS…AKIEDLNSQA (66 aa). A compositionally biased stretch (basic and acidic residues) spans 128–157; it reads ESHDHAGHDHSGHDHSHDHGKGKAVDTEEK. The span at 158-169 shows a compositional bias: acidic residues; sequence KEEEEDDTEEVD. In terms of domain architecture, UBA spans 173–212; it reads LEDKDIELVMTQASVSRNKAVKALKENDNDIVNSIMALSI.

The protein belongs to the NAC-alpha family. Part of the nascent polypeptide-associated complex (NAC), consisting of EGD2 and EGD1. NAC associates with ribosomes via EGD1.

The protein localises to the cytoplasm. It localises to the nucleus. In terms of biological role, component of the nascent polypeptide-associated complex (NAC), a dynamic component of the ribosomal exit tunnel, protecting the emerging polypeptides from interaction with other cytoplasmic proteins to ensure appropriate nascent protein targeting. The NAC complex also promotes mitochondrial protein import by enhancing productive ribosome interactions with the outer mitochondrial membrane and blocks the inappropriate interaction of ribosomes translating non-secretory nascent polypeptides with translocation sites in the membrane of the endoplasmic reticulum. EGD2 may also be involved in transcription regulation. The chain is Nascent polypeptide-associated complex subunit alpha (egd2) from Botryotinia fuckeliana (strain B05.10) (Noble rot fungus).